Reading from the N-terminus, the 426-residue chain is Enolase (426 aa).

Q163 is a (2R)-2-phosphoglycerate binding site. The active-site Proton donor is the E205. Residues D242, E283, and D310 each coordinate Mg(2+). (2R)-2-phosphoglycerate contacts are provided by K335, R364, S365, and K386. Residue K335 is the Proton acceptor of the active site.

The protein belongs to the enolase family. The cofactor is Mg(2+).

The protein localises to the cytoplasm. It localises to the secreted. The protein resides in the cell surface. The enzyme catalyses (2R)-2-phosphoglycerate = phosphoenolpyruvate + H2O. It functions in the pathway carbohydrate degradation; glycolysis; pyruvate from D-glyceraldehyde 3-phosphate: step 4/5. Functionally, catalyzes the reversible conversion of 2-phosphoglycerate (2-PG) into phosphoenolpyruvate (PEP). It is essential for the degradation of carbohydrates via glycolysis. The protein is Enolase of Cutibacterium acnes (strain DSM 16379 / KPA171202) (Propionibacterium acnes).